The primary structure comprises 235 residues: Putative homeobox-leucine zipper protein ATHB-51 (235 aa).

Positions 74–133 form a DNA-binding region, homeobox; that stretch reads EMIKKKRLTSGQLASLERSFQEEIKLDSDRKVKLSRELGLQPRQIAVWFQNRRARWKAKQ. The tract at residues 134-162 is leucine-zipper; it reads LEQLYDSLRQEYDVVSREKQMLHDEVKKL.

This sequence belongs to the HD-ZIP homeobox family. Class I subfamily. In terms of tissue distribution, widely expressed.

The protein localises to the nucleus. Functionally, putative transcription factor. The chain is Putative homeobox-leucine zipper protein ATHB-51 (ATHB-51) from Arabidopsis thaliana (Mouse-ear cress).